A 468-amino-acid chain; its full sequence is 6-phospho-beta-galactosidase (468 aa).

Positions 19, 116, 159, 160, and 297 each coordinate D-galactose 6-phosphate. E160 serves as the catalytic Proton donor. E375 (nucleophile) is an active-site residue. D-galactose 6-phosphate is bound by residues S428, W429, K435, and Y437.

Belongs to the glycosyl hydrolase 1 family.

The catalysed reaction is a 6-phospho-beta-D-galactoside + H2O = D-galactose 6-phosphate + an alcohol. The protein operates within carbohydrate metabolism; lactose degradation; D-galactose 6-phosphate and beta-D-glucose from lactose 6-phosphate: step 1/1. This is 6-phospho-beta-galactosidase from Streptococcus pyogenes serotype M4 (strain MGAS10750).